The sequence spans 396 residues: L-lactate dehydrogenase (396 aa).

Residues 1-380 (MIISAASDYR…SGDSLVQELG (380 aa)) form the FMN hydroxy acid dehydrogenase domain. Y24 contacts substrate. S106 and Q127 together coordinate FMN. Substrate is bound at residue Y129. T155 is an FMN binding site. Substrate is bound at residue R164. K251 contacts FMN. H275 serves as the catalytic Proton acceptor. R278 serves as a coordination point for substrate. Residue 306 to 330 (DSGIRNGLDVVRMIALGADTVLLGR) participates in FMN binding.

This sequence belongs to the FMN-dependent alpha-hydroxy acid dehydrogenase family. FMN is required as a cofactor.

It localises to the cell inner membrane. It carries out the reaction (S)-lactate + A = pyruvate + AH2. Its function is as follows. Catalyzes the conversion of L-lactate to pyruvate. Is coupled to the respiratory chain. This Salmonella paratyphi B (strain ATCC BAA-1250 / SPB7) protein is L-lactate dehydrogenase.